The primary structure comprises 345 residues: Sesquiterpene synthase GALMADRAFT_104215 (345 aa).

The Mg(2+) site is built by Asp91, Asn226, Ser230, and Glu234. The short motif at 91 to 95 is the DDXXD motif element; it reads DEFTD. (2E,6E)-farnesyl diphosphate-binding residues include Arg316 and Tyr317.

Belongs to the terpene synthase family. The cofactor is Mg(2+).

It carries out the reaction (2E,6E)-farnesyl diphosphate = beta-gurjunene + diphosphate. In terms of biological role, terpene cyclase that catalyzes the cyclization of farnesyl diphosphate (FPP) to beta-gurjunene. This Galerina marginata (strain CBS 339.88) protein is Sesquiterpene synthase GALMADRAFT_104215.